The following is a 329-amino-acid chain: Phenylalanine--tRNA ligase alpha subunit (329 aa).

Glu-254 serves as a coordination point for Mg(2+).

It belongs to the class-II aminoacyl-tRNA synthetase family. Phe-tRNA synthetase alpha subunit type 1 subfamily. As to quaternary structure, tetramer of two alpha and two beta subunits. The cofactor is Mg(2+).

It is found in the cytoplasm. The catalysed reaction is tRNA(Phe) + L-phenylalanine + ATP = L-phenylalanyl-tRNA(Phe) + AMP + diphosphate + H(+). The chain is Phenylalanine--tRNA ligase alpha subunit (pheS) from Haemophilus influenzae (strain ATCC 51907 / DSM 11121 / KW20 / Rd).